A 396-amino-acid chain; its full sequence is MIELLFLLLPIAAAYGWYMGRRSAKKDQDDISNKLSRDYVTGVNFLLSNQTDKAVDLFLDMLQKQEIENEIESHSQFEAELTLGNLFRSRGEVDRALRIHQALDLSPNYTFEQKLLAKQQLARDFMVVGFFDRAENLYILLVDEPEFAENALQQLLVIYQKTKEWKKAVNIAEKLAKIKPQENNIELAQCYCEYSQSLEPESAVEKRSVLQKALSVSPTCVRASLLLANLAMLDGQYQQAVKILENVLEQNPDYTGEILLPLKHCYEELNQLDNFELFLIRAGQIINNDEVELALAKLIEEKDGKSAAQAKLYQQLTKKPSTLIFHRFMQYQIDDAEDGRGKESLILLHKMVGERIKQTSPYRCTNCGYQIHKLLWNCPSCRQWESIKPVSNQEHN.

A helical transmembrane segment spans residues 1-20 (MIELLFLLLPIAAAYGWYMG). At 21-396 (RRSAKKDQDD…IKPVSNQEHN (376 aa)) the chain is on the cytoplasmic side. 4 TPR repeats span residues 35–68 (LSRD…QEIE), 77–109 (FEAE…SPNY), 149–182 (ENAL…KPQE), and 221–254 (VRAS…NPDY). C364, C367, C378, and C381 together coordinate Fe cation.

The protein belongs to the LapB family.

Its subcellular location is the cell inner membrane. In terms of biological role, modulates cellular lipopolysaccharide (LPS) levels by regulating LpxC, which is involved in lipid A biosynthesis. May act by modulating the proteolytic activity of FtsH towards LpxC. May also coordinate assembly of proteins involved in LPS synthesis at the plasma membrane. The protein is Lipopolysaccharide assembly protein B of Haemophilus influenzae (strain ATCC 51907 / DSM 11121 / KW20 / Rd).